The following is a 460-amino-acid chain: CCA-adding enzyme (460 aa).

The ATP site is built by serine 50 and arginine 53. Residues serine 50 and arginine 53 each contribute to the CTP site. Aspartate 62, aspartate 64, and aspartate 117 together coordinate Mg(2+). ATP contacts are provided by histidine 140, lysine 159, and tyrosine 168. The CTP site is built by histidine 140, lysine 159, and tyrosine 168.

The protein belongs to the tRNA nucleotidyltransferase/poly(A) polymerase family. Archaeal CCA-adding enzyme subfamily. As to quaternary structure, homodimer. The cofactor is Mg(2+).

It catalyses the reaction a tRNA precursor + 2 CTP + ATP = a tRNA with a 3' CCA end + 3 diphosphate. The enzyme catalyses a tRNA with a 3' CCA end + 2 CTP + ATP = a tRNA with a 3' CCACCA end + 3 diphosphate. Catalyzes the addition and repair of the essential 3'-terminal CCA sequence in tRNAs without using a nucleic acid template. Adds these three nucleotides in the order of C, C, and A to the tRNA nucleotide-73, using CTP and ATP as substrates and producing inorganic pyrophosphate. tRNA 3'-terminal CCA addition is required both for tRNA processing and repair. Also involved in tRNA surveillance by mediating tandem CCA addition to generate a CCACCA at the 3' terminus of unstable tRNAs. While stable tRNAs receive only 3'-terminal CCA, unstable tRNAs are marked with CCACCA and rapidly degraded. The protein is CCA-adding enzyme of Methanoregula boonei (strain DSM 21154 / JCM 14090 / 6A8).